The sequence spans 355 residues: Holliday junction branch migration complex subunit RuvB (355 aa).

A large ATPase domain (RuvB-L) region spans residues 4 to 190 (TDKLAAERII…FGIVARLEFY (187 aa)). Residues leucine 29, arginine 30, glycine 71, lysine 74, threonine 75, threonine 76, 137–139 (EDY), arginine 180, tyrosine 190, and arginine 227 each bind ATP. Mg(2+) is bound at residue threonine 75. Residues 191–261 (DAEQLSRIVR…VADAALAMLD (71 aa)) form a small ATPAse domain (RuvB-S) region. The interval 264 to 355 (PVGFDLMDRK…GSMWNTPDGA (92 aa)) is head domain (RuvB-H). 3 residues coordinate DNA: arginine 300, arginine 319, and arginine 324.

It belongs to the RuvB family. In terms of assembly, homohexamer. Forms an RuvA(8)-RuvB(12)-Holliday junction (HJ) complex. HJ DNA is sandwiched between 2 RuvA tetramers; dsDNA enters through RuvA and exits via RuvB. An RuvB hexamer assembles on each DNA strand where it exits the tetramer. Each RuvB hexamer is contacted by two RuvA subunits (via domain III) on 2 adjacent RuvB subunits; this complex drives branch migration. In the full resolvosome a probable DNA-RuvA(4)-RuvB(12)-RuvC(2) complex forms which resolves the HJ.

Its subcellular location is the cytoplasm. It carries out the reaction ATP + H2O = ADP + phosphate + H(+). Its function is as follows. The RuvA-RuvB-RuvC complex processes Holliday junction (HJ) DNA during genetic recombination and DNA repair, while the RuvA-RuvB complex plays an important role in the rescue of blocked DNA replication forks via replication fork reversal (RFR). RuvA specifically binds to HJ cruciform DNA, conferring on it an open structure. The RuvB hexamer acts as an ATP-dependent pump, pulling dsDNA into and through the RuvAB complex. RuvB forms 2 homohexamers on either side of HJ DNA bound by 1 or 2 RuvA tetramers; 4 subunits per hexamer contact DNA at a time. Coordinated motions by a converter formed by DNA-disengaged RuvB subunits stimulates ATP hydrolysis and nucleotide exchange. Immobilization of the converter enables RuvB to convert the ATP-contained energy into a lever motion, pulling 2 nucleotides of DNA out of the RuvA tetramer per ATP hydrolyzed, thus driving DNA branch migration. The RuvB motors rotate together with the DNA substrate, which together with the progressing nucleotide cycle form the mechanistic basis for DNA recombination by continuous HJ branch migration. Branch migration allows RuvC to scan DNA until it finds its consensus sequence, where it cleaves and resolves cruciform DNA. The polypeptide is Holliday junction branch migration complex subunit RuvB (Burkholderia vietnamiensis (strain G4 / LMG 22486) (Burkholderia cepacia (strain R1808))).